Consider the following 397-residue polypeptide: Chorismate synthase (397 aa).

NADP(+)-binding residues include arginine 40 and arginine 46. Residues 129-131, 257-258, glycine 302, 317-321, and arginine 343 contribute to the FMN site; these read RAS, QA, and KPIAT.

It belongs to the chorismate synthase family. In terms of assembly, homotetramer. The cofactor is FMNH2.

It catalyses the reaction 5-O-(1-carboxyvinyl)-3-phosphoshikimate = chorismate + phosphate. It functions in the pathway metabolic intermediate biosynthesis; chorismate biosynthesis; chorismate from D-erythrose 4-phosphate and phosphoenolpyruvate: step 7/7. Its function is as follows. Catalyzes the anti-1,4-elimination of the C-3 phosphate and the C-6 proR hydrogen from 5-enolpyruvylshikimate-3-phosphate (EPSP) to yield chorismate, which is the branch point compound that serves as the starting substrate for the three terminal pathways of aromatic amino acid biosynthesis. This reaction introduces a second double bond into the aromatic ring system. The polypeptide is Chorismate synthase (Chlorobium phaeobacteroides (strain BS1)).